A 510-amino-acid chain; its full sequence is Citrate lyase alpha chain (510 aa).

In terms of assembly, oligomer with a subunit composition of (alpha,beta,gamma)6.

The protein localises to the cytoplasm. The enzyme catalyses citrate = oxaloacetate + acetate. The catalysed reaction is citrate + acetyl-CoA = (3S)-citryl-CoA + acetate. Functionally, represents a citrate:acetyl-ACP transferase. The protein is Citrate lyase alpha chain (citF) of Escherichia coli (strain K12).